The sequence spans 464 residues: Protein btn-1 (464 aa).

The first 22 residues, 1–22, serve as a signal peptide directing secretion; the sequence is MNRSPSSSGLLPLPGAPSSSWA. 10 helical membrane passes run 38-58, 73-93, 102-122, 129-149, 167-187, 190-210, 288-308, 332-352, 354-374, and 376-396; these read AVFI…VIIL, VVLL…PYFI, IFIF…TPPS, LIGV…FLGL, GAGL…GLSV, SLLA…LILP, SLFF…YTIN, PFYG…IAFI, IHHL…LTLH, and LLNF…EGLL.

Belongs to the battenin family.

The protein resides in the vacuole membrane. Involved in vacuolar transport and vacuole pH homeostasis. Also required for cytokinesis. This is Protein btn-1 (cln3) from Neurospora crassa (strain ATCC 24698 / 74-OR23-1A / CBS 708.71 / DSM 1257 / FGSC 987).